The sequence spans 216 residues: Outer-membrane lipoprotein LolB (216 aa).

An N-terminal signal peptide occupies residues 1–24; that stretch reads MNNLNYFTKISASCAALALMTLAG. A lipid anchor (N-palmitoyl cysteine) is attached at cysteine 25. Residue cysteine 25 is the site of S-diacylglycerol cysteine attachment.

This sequence belongs to the LolB family. Monomer.

It is found in the cell outer membrane. Plays a critical role in the incorporation of lipoproteins in the outer membrane after they are released by the LolA protein. The protein is Outer-membrane lipoprotein LolB of Shewanella loihica (strain ATCC BAA-1088 / PV-4).